Consider the following 687-residue polypeptide: Mitochondrial 15S rRNA processing factor ppr3 (687 aa).

Residues 1 to 49 (MLNKCSGSLTLLAVRRFCGPCRRLHYHKDNPNNINIAKNLLNNNIQARC) constitute a mitochondrion transit peptide. PPR repeat units lie at residues 262 to 296 (NGLV…SITP), 297 to 331 (SKDF…ATSI), 334 to 368 (SAET…PIDP), and 372 to 407 (TTFV…GLRP).

This sequence belongs to the CCM1 family. As to quaternary structure, binds to mitochondrial small subunit 15S rRNA.

The protein localises to the mitochondrion. Its function is as follows. Regulates mitochondrial small subunit maturation by controlling 15S rRNA 5'-end processing. Localizes to the 5' precursor of the 15S rRNA in a position that is subsequently occupied by mS47 in the mature yeast mtSSU. Uses structure and sequence-specific RNA recognition, binding to a single-stranded region of the precursor and specifically recognizing bases -6 to -1. The exchange of Ccm1 for mS47 is coupled to the irreversible removal of precursor rRNA that is accompanied by conformational changes of the mitoribosomal proteins uS5m and mS26. These conformational changes signal completion of 5'-end rRNA processing through protection of the mature 5'-end of the 15S rRNA and stabilization of mS47. The removal of the 5' precursor together with the dissociation of Ccm1 may be catalyzed by the 5'-3' exoribonuclease Pet127. Involved in the specific removal of group I introns in mitochondrial encoded transcripts. This is Mitochondrial 15S rRNA processing factor ppr3 from Schizosaccharomyces pombe (strain 972 / ATCC 24843) (Fission yeast).